Here is a 514-residue protein sequence, read N- to C-terminus: uncharacterized protein (514 aa).

Disordered stretches follow at residues 1–68 (MSSP…SESE), 109–244 (VPPP…RQAS), and 272–484 (RPAV…AQGC). Positions 368 to 384 (KPQKPKHSSPGKKPAGR) are enriched in basic residues. Residues 385–405 (KTRESQAAAREDNDPNRDEVP) show a composition bias toward basic and acidic residues.

This is an uncharacterized protein from Homo sapiens (Human).